Reading from the N-terminus, the 107-residue chain is Phosphoribosyl-ATP pyrophosphatase (107 aa).

Belongs to the PRA-PH family.

Its subcellular location is the cytoplasm. It catalyses the reaction 1-(5-phospho-beta-D-ribosyl)-ATP + H2O = 1-(5-phospho-beta-D-ribosyl)-5'-AMP + diphosphate + H(+). It functions in the pathway amino-acid biosynthesis; L-histidine biosynthesis; L-histidine from 5-phospho-alpha-D-ribose 1-diphosphate: step 2/9. This is Phosphoribosyl-ATP pyrophosphatase from Bacillus anthracis (strain A0248).